Reading from the N-terminus, the 418-residue chain is Actin-related protein 3B (418 aa).

This sequence belongs to the actin family. ARP3 subfamily. In terms of assembly, interacts with the Arp2/3 complex composed of ARP2, ARP3, ARPC1B, ARPC1B/p41-ARC, ARPC2/p34-ARC, ARPC3/p21-ARC, ARPC4/p20-ARC and ARPC5/p16-ARC. In terms of tissue distribution, detected in fetal brain. Detected throughout the adult brain, in neurons from gray matter, but not in white matter. Detected in liver, skeletal muscle and pancreas. Detected in lung adenocarcinoma cells with low metastatic potential, but not in lung adenocarcinoma cells with high metastatic potential.

It is found in the cytoplasm. Its subcellular location is the cytoskeleton. The protein resides in the cell projection. Functionally, plays a role in the organization of the actin cytoskeleton. May function as ATP-binding component of the Arp2/3 complex which is involved in regulation of actin polymerization and together with an activating nucleation-promoting factor (NPF) mediates the formation of branched actin networks. May decrease the metastatic potential of tumors. In Homo sapiens (Human), this protein is Actin-related protein 3B (ACTR3B).